A 256-amino-acid polypeptide reads, in one-letter code: tRNA (guanine-N(7)-)-methyltransferase (256 aa).

Residues 1 to 11 (MHPQDASTEQT) show a composition bias toward polar residues. A disordered region spans residues 1–35 (MHPQDASTEQTPVDDDQVESSQPVHAPEDVAHPRR). S-adenosyl-L-methionine is bound by residues Glu-85, Glu-110, Asp-137, and Asp-160. The active site involves Asp-160. Lys-164 serves as a coordination point for substrate. The segment at 166–171 (RHNKRR) is interaction with RNA. Residues Asp-196 and 234 to 237 (TKFE) each bind substrate.

Belongs to the class I-like SAM-binding methyltransferase superfamily. TrmB family.

The enzyme catalyses guanosine(46) in tRNA + S-adenosyl-L-methionine = N(7)-methylguanosine(46) in tRNA + S-adenosyl-L-homocysteine. The protein operates within tRNA modification; N(7)-methylguanine-tRNA biosynthesis. Functionally, catalyzes the formation of N(7)-methylguanine at position 46 (m7G46) in tRNA. This chain is tRNA (guanine-N(7)-)-methyltransferase, found in Cupriavidus pinatubonensis (strain JMP 134 / LMG 1197) (Cupriavidus necator (strain JMP 134)).